Consider the following 950-residue polypeptide: Sodium/calcium exchanger Calx (950 aa).

Residues 1 to 22 form the signal peptide; sequence MQLLLKSIFTCALFVIFVYATA. Topologically, residues 23-120 are extracellular; that stretch reads QSLLKVQETE…PQRNISVGDR (98 aa). N-linked (GlcNAc...) asparagine glycans are attached at residues Asn-39, Asn-47, and Asn-114. The helical transmembrane segment at 121 to 141 threads the bilayer; it reads LVRGFVYFVLLIYLFVGVSII. At 142-179 the chain is on the cytoplasmic side; that stretch reads ADRFMAAIEAITSIERAVVVKGPNNTKQVMHVRIWNET. A helical membrane pass occupies residues 180–200; it reads VANLTLMALGSSAPEILLSVI. The Extracellular portion of the chain corresponds to 201–216; the sequence is EIYAKDFESGDLGPGT. Residues 217 to 237 form a helical membrane-spanning segment; sequence IVGSAAYNLFMIIAVCMIWIP. The Cytoplasmic portion of the chain corresponds to 238-257; the sequence is AGEVRRIRHLRVFFVTALFS. 2 consecutive transmembrane segments (helical) span residues 258-278 and 279-299; these read VFAY…VILV and WEAI…YIAE. At 300-749 the chain is on the cytoplasmic side; that stretch reads RRLLVYKYMD…NDDEEEEVPS (450 aa). The interval 301–318 is corresponds to the exchanger inhibitory peptide (XIP) found in other sodium/calcium exchange proteins and thought to be involved in calmodulin binding; that stretch reads RLLVYKYMDKNYRVNKRG. Residues 440 to 551 form the Calx-beta 1 domain; the sequence is DPIRMYFEPG…MIATVMILDD (112 aa). The Ca(2+) site is built by Glu-455, Asp-490, Asp-515, Asp-516, Val-518, Glu-520, Glu-523, Asp-550, Asp-551, and Asp-552. The region spanning 555 to 694 is the Calx-beta 2 domain; the sequence is GIFAFTDSVF…LTTAYVRIRE (140 aa). Residues 750 to 770 traverse the membrane as a helical segment; it reads CFSYVSHFVCLFWKVLFAFVP. At 771-775 the chain is on the extracellular side; it reads PTDIC. A helical membrane pass occupies residues 776-796; the sequence is GGYVTFVVSIFVIGVITAIIG. Topologically, residues 797–813 are cytoplasmic; that stretch reads DAASYFGCALNIKDSVT. A helical membrane pass occupies residues 814–834; the sequence is AILFVALGTSIPDTFASMIAA. Over 835–848 the chain is Extracellular; it reads KHDEGADNCIGNVT. A glycan (N-linked (GlcNAc...) asparagine) is linked at Asn-846. The chain crosses the membrane as a helical span at residues 849–869; the sequence is GSNAVNVFLGIGLAWTIAAVY. At 870 to 883 the chain is on the cytoplasmic side; the sequence is HSSHGMTFNVEPGT. Residues 884–904 form a helical membrane-spanning segment; it reads IGFAVALFCGEALIAIMLIMF. At 905-923 the chain is on the extracellular side; that stretch reads RRWHKGIGAELGGPKVSKY. A helical membrane pass occupies residues 924–944; sequence ISAAILVFLWVFYVVICILEA. Topologically, residues 945–950 are cytoplasmic; that stretch reads YDVIRV.

The protein belongs to the Ca(2+):cation antiporter (CaCA) (TC 2.A.19) family. SLC8 subfamily. As to expression, ubiquitously expressed with higher expression in head compared to body (at protein level). Enriched in photoreceptor cells of the eye (at protein level). In the adult head, expressed in retina, optic ganglia and all neuronal tissues.

It is found in the cell membrane. Its subcellular location is the cell projection. The protein resides in the rhabdomere membrane. The catalysed reaction is Ca(2+)(in) + 3 Na(+)(out) = Ca(2+)(out) + 3 Na(+)(in). With respect to regulation, activated by a Na(+) electrochemical gradient but also undergoes Na(2+)-dependent inactivation. Inhibited by micromolar levels of cytoplasmic Ca(2+), which is the opposite of most characterized mammalian homologs. Exhibits greater extent of inhibition by Ca(2+) than isoform D/1.2. Its activity is regulated as follows. Exhibits greater Na(2+)-dependent inactivation than isoform A/1.1, probably due to greater stability of the inactive Na(2+)-bound form. In terms of biological role, na(+)/Ca(2+) antiporter that couples the energy of a Na(+) electrochemical gradient to the movement of Ca(2+) against an electrochemical gradient across a membrane, which contributes to the regulation of cytoplasmic Ca(2+) levels. Mediates Na(+)/Ca(2+) exchange in photoreceptor cells and involved in controlling Ca(2+) levels during phototransduction, affecting magnitude of the photoresponse, activation kinetics, signal amplification, response termination, and light adaptation. Light induced depolarization of photoreceptor cells, resulting in Na(+) and Ca(2+) entry through trp/transient receptor potential protein channels, is essential for photoreceptor cell function but may result in toxic levels of cytoplasmic Ca(2+). Na(+)/Ca(2+) antiporter regulation of Ca(2+) levels protects photoreceptor cells from light-dependent retinal degeneration. The polypeptide is Sodium/calcium exchanger Calx (Drosophila melanogaster (Fruit fly)).